The primary structure comprises 111 residues: Disintegrin lebein-1-alpha (111 aa).

The N-terminal stretch at 1–20 (MIQVLLVTICLAVFPYQGSS) is a signal peptide. The propeptide occupies 21–47 (IILESGNVNDYEIVYPKKVTVLPTGAM). The Disintegrin domain occupies 47–111 (MNSGNPCCDP…SDCPRNPYKD (65 aa)). 4 disulfides stabilise this stretch: cysteine 53–cysteine 76, cysteine 67–cysteine 73, cysteine 72–cysteine 97, and cysteine 85–cysteine 104. A Cell attachment site motif is present at residues 89–91 (RGD).

It belongs to the disintegrin family. Dimeric disintegrin subfamily. In terms of assembly, heterodimer with subunit beta; disulfide-linked. As to expression, expressed by the venom gland.

It localises to the secreted. Strongly inhibits ADP-induced platelet aggregation on human platelet-rich plasma. Also avidly binds to the laminin-binding beta-1 integrins (alpha-3/beta-1, alpha-6/beta-1, and alpha-7/beta-1) in an RGD-independent manner. In Macrovipera lebetinus (Levantine viper), this protein is Disintegrin lebein-1-alpha.